Reading from the N-terminus, the 554-residue chain is Carboxypeptidase Y homolog A (554 aa).

An N-terminal signal peptide occupies residues 1–17 (MRVAASTVLLGVASAAS). Residues 18–137 (FQQQTQHVLS…KLADFNLRVK (120 aa)) constitute a propeptide that is removed on maturation. 5 cysteine pairs are disulfide-bonded: Cys-191-Cys-431, Cys-325-Cys-339, Cys-349-Cys-372, Cys-356-Cys-365, and Cys-394-Cys-401. The N-linked (GlcNAc...) asparagine glycan is linked to Asn-222. Residue Ser-278 is part of the active site. The active site involves Asp-470. N-linked (GlcNAc...) asparagine glycosylation occurs at Asn-518. His-529 is a catalytic residue.

The protein belongs to the peptidase S10 family.

The protein resides in the vacuole. The catalysed reaction is Release of a C-terminal amino acid with broad specificity.. In terms of biological role, vacuolar carboxypeptidase involved in degradation of small peptides. Digests preferentially peptides containing an aliphatic or hydrophobic residue in P1' position, as well as methionine, leucine or phenylalanine in P1 position of ester substrate. The chain is Carboxypeptidase Y homolog A (CPYA) from Podospora anserina (strain S / ATCC MYA-4624 / DSM 980 / FGSC 10383) (Pleurage anserina).